The sequence spans 51 residues: DNA-directed RNA polymerase subunit Rpo12 (51 aa).

Zn(2+) contacts are provided by C14, C29, and C32.

The protein belongs to the archaeal Rpo12/eukaryotic RPC10 RNA polymerase subunit family. In terms of assembly, part of the RNA polymerase complex. It depends on Zn(2+) as a cofactor.

The protein localises to the cytoplasm. The catalysed reaction is RNA(n) + a ribonucleoside 5'-triphosphate = RNA(n+1) + diphosphate. Functionally, DNA-dependent RNA polymerase (RNAP) catalyzes the transcription of DNA into RNA using the four ribonucleoside triphosphates as substrates. The chain is DNA-directed RNA polymerase subunit Rpo12 from Methanopyrus kandleri (strain AV19 / DSM 6324 / JCM 9639 / NBRC 100938).